The sequence spans 364 residues: MKALILVGGFGTRLRPLTLTMPKPLVEFGNKRMILHQIEALAAAGVTDIVLAVNYRPEIMEKYLAEYEKQFGINITISIESEPLGTAGPLKLAEDVLRKDDTPFFVLNSDVTCEYPFKELAAFHKAHGDEGTIVVTKVEEPSKYGVVVHKPNHPSRIDRFVEKPVQFVGNRINAGLYIFNPSVIDRVELRPTSIEQETFPAMVRDGQLHSFDLEGFWMDIGQPKDFLTGTCLYLSSLTKKGSKELAPTTLPYIHGGNVLIDPSAKIGKNCRIGPNVTIGPNVVVGDGVRLQRCVLLEGSKVKDHAWVKSTIVGWNSTVGKWARLENVTVLGDDVTIGDEIYVNGGSILPHKTIKANVDVPAIIM.

Belongs to the transferase hexapeptide repeat family.

The protein localises to the cytoplasm. The enzyme catalyses alpha-D-mannose 1-phosphate + GTP + H(+) = GDP-alpha-D-mannose + diphosphate. It functions in the pathway nucleotide-sugar biosynthesis; GDP-alpha-D-mannose biosynthesis; GDP-alpha-D-mannose from alpha-D-mannose 1-phosphate (GTP route): step 1/1. Involved in cell wall synthesis where it is required for glycosylation. Involved in cell cycle progression through cell-size checkpoint. The protein is Mannose-1-phosphate guanyltransferase (mpg-1) of Neurospora crassa (strain ATCC 24698 / 74-OR23-1A / CBS 708.71 / DSM 1257 / FGSC 987).